Reading from the N-terminus, the 1169-residue chain is Rabankyrin-5 (1169 aa).

The residue at position 2 (Ala2) is an N-acetylalanine. The 63-residue stretch at 68–130 (SDLKIKVGDR…IYTDELEFRE (63 aa)) folds into the BTB domain. ANK repeat units lie at residues 217–247 (KTEY…QLPG), 255–284 (NGDL…DVDM), 288–317 (NGWS…LVNA), 322–362 (AQET…NPNM), and 366–396 (KGRT…DLEL). Ser270 is subject to Phosphoserine. The NPF signature appears at 421–423 (NPF). 16 ANK repeats span residues 490–519 (WGET…NPNL), 542–572 (YLQT…ALHA), 588–617 (RDQT…SIND), 621–650 (DGQT…DINV), 654–683 (DGET…DMSV), 687–716 (KGNP…DATC), 724–753 (CLQT…DVNS), 769–798 (DGQT…NVNA), 802–832 (EGRT…ELSV), 836–865 (QGLT…GAAE), 870–899 (KGRN…NVNS), 905–934 (SKLT…KVNE), 938–967 (HRQT…DFAA), 971–1001 (NGNN…DAEA), 1005–1037 (RGQS…EYPL), and 1043–1072 (EGNT…RLGV). The interaction with RHOD and RAB5A stretch occupies residues 650-759 (VRTQDGETAL…DVNSPRQPGT (110 aa)). The FYVE-type zinc-finger motif lies at 1104-1164 (WCDGSNCYEC…VCNICFDVLT (61 aa)). Zn(2+) contacts are provided by Cys1110, Cys1113, Cys1126, Cys1129, Cys1134, Cys1137, Cys1156, and Cys1159.

As to quaternary structure, interacts with RAB5A (in GTP-bound form). Interacts with RHOD (independent of GTP-loaded status). Interacts with EHD1. Interacts with VPS26A; the interaction is independent of EHD1 and is indicative for an association with the cargo recognition subcomplex of the retromer complex. As to expression, expressed in kidney proximal tubule epithelial cells; at protein level.

Its subcellular location is the cytoplasm. The protein resides in the endosome membrane. It is found in the cytoplasmic vesicle. Proposed effector of Rab5. Binds to phosphatidylinositol 3-phosphate (PI(3)P). Involved in homotypic early endosome fusion and to a lesser extent in heterotypic fusion of chlathrin-coated vesicles with early endosomes. Required for correct endosomal localization. Involved in the internalization and trafficking of activated tyrosine kinase receptors such as PDGFRB. Regulates the subcellular localization of the retromer complex in a EHD1-dependent manner. Involved in endosome-to-Golgi transport and biosynthetic transport to late endosomes and lysosomes indicative for a regulation of retromer complex-mediated retrograde transport. Involved in macropinocytosis; the function is dependent on Rab5-GTP. The protein is Rabankyrin-5 (Ankfy1) of Mus musculus (Mouse).